Here is a 552-residue protein sequence, read N- to C-terminus: Hyaluronan synthase 2 (552 aa).

Over 1 to 11 (MHCERFLCVLR) the chain is Cytoplasmic. Residues 12 to 32 (IIGTTLFGVSLLLGITAAYIV) traverse the membrane as a helical segment. Residues 33-45 (GYQFIQTDNYYFS) are Extracellular-facing. The helical transmembrane segment at 46 to 66 (FGLYGAFLASHLIIQSLFAFL) threads the bilayer. At 67–374 (EHRKMKKSLE…NAMWFHKHHL (308 aa)) the chain is on the cytoplasmic side. Threonine 110 is modified (phosphothreonine). Residue lysine 190 forms a Glycyl lysine isopeptide (Lys-Gly) (interchain with G-Cter in ubiquitin) linkage. Serine 221 carries an O-linked (GlcNAc) serine glycan. Position 328 is a phosphothreonine (threonine 328). The helical transmembrane segment at 375–395 (WMTYEAVITGFFPFFLIATVI) threads the bilayer. Over 396-402 (QLFYRGK) the chain is Extracellular. A helical transmembrane segment spans residues 403–423 (IWNILLFLLTVQLVGLIKSSF). The Cytoplasmic segment spans residues 424-429 (ASCLRG). A helical membrane pass occupies residues 430-450 (NIVMVFMSLYSVLYMSSLLPA). At 451 to 475 (KMFAIATINKAGWGTSGRKTIVVNF) the chain is on the extracellular side. Residues 476 to 496 (IGLIPVSVWFTILLGGVIFTI) traverse the membrane as a helical segment. Residues 497–510 (YKESKKPFSESKQT) lie on the Cytoplasmic side of the membrane. Residues 511–531 (VLIVGTLIYACYWVVLLTLYV) form a helical membrane-spanning segment. Topologically, residues 532–552 (VLINKCGRRKKGQQYDMVLDV) are extracellular.

The protein belongs to the NodC/HAS family. Homodimer; dimerization promotes enzymatic activity. Forms heterodimer with HAS3. Forms heterodimer with HAS1. Requires Mg(2+) as cofactor. Phosphorylation at Thr-328 is essential for hyaluronan synthase activity. In terms of processing, O-GlcNAcylation at Ser-221 increases the stability of HAS2 and plasma membrane localization. Post-translationally, ubiquitination at Lys-190; this ubiquitination is essential for hyaluronan synthase activity and homo- or hetero-oligomerization. Can also be poly-ubiquitinated. Deubiquitinated by USP17L22/USP17 and USP4. USP17L22/USP17 efficiently removes 'Lys-63'- and 'Lys-48'-linked polyubiquitin chains, whereas USP4 preferentially removes monoubiquitination and, partially, both 'Lys-63'- and 'Lys-48'-linked polyubiquitin chain.

The protein localises to the cell membrane. Its subcellular location is the endoplasmic reticulum membrane. It localises to the vesicle. The protein resides in the golgi apparatus membrane. It is found in the lysosome. It catalyses the reaction [hyaluronan](n) + UDP-N-acetyl-alpha-D-glucosamine = N-acetyl-beta-D-glucosaminyl-(1-&gt;4)-[hyaluronan](n) + UDP + H(+). The catalysed reaction is N-acetyl-beta-D-glucosaminyl-(1-&gt;4)-[hyaluronan](n) + UDP-alpha-D-glucuronate = [hyaluronan](n+1) + UDP + H(+). It participates in glycan biosynthesis; hyaluronan biosynthesis. Functionally, catalyzes the addition of GlcNAc or GlcUA monosaccharides to the nascent hyaluronan polymer. Therefore, it is essential to hyaluronan synthesis a major component of most extracellular matrices that has a structural role in tissues architectures and regulates cell adhesion, migration and differentiation. This is one of three isoenzymes responsible for cellular hyaluronan synthesis and it is particularly responsible for the synthesis of high molecular mass hyaluronan. This Rattus norvegicus (Rat) protein is Hyaluronan synthase 2 (Has2).